Reading from the N-terminus, the 438-residue chain is GTPase Obg (438 aa).

The 159-residue stretch at 6 to 164 (AEFVDRVKIF…RWLELELKIL (159 aa)) folds into the Obg domain. In terms of domain architecture, OBG-type G spans 165 to 335 (ADVGLVGYPN…LLDRVASIVR (171 aa)). Residues 171 to 178 (GYPNVGKS), 196 to 200 (FTTLV), 217 to 220 (DIPG), 287 to 290 (NKID), and 316 to 318 (SAV) each bind GTP. Positions 178 and 198 each coordinate Mg(2+). The region spanning 358–438 (VWRKLPERFE…IGNFEFEYRE (81 aa)) is the OCT domain.

The protein belongs to the TRAFAC class OBG-HflX-like GTPase superfamily. OBG GTPase family. Monomer. It depends on Mg(2+) as a cofactor.

It is found in the cytoplasm. An essential GTPase which binds GTP, GDP and possibly (p)ppGpp with moderate affinity, with high nucleotide exchange rates and a fairly low GTP hydrolysis rate. Plays a role in control of the cell cycle, stress response, ribosome biogenesis and in those bacteria that undergo differentiation, in morphogenesis control. The chain is GTPase Obg from Thermotoga neapolitana (strain ATCC 49049 / DSM 4359 / NBRC 107923 / NS-E).